Here is a 367-residue protein sequence, read N- to C-terminus: MEAEVINQLNNTLNDLEKRSEDIRVYMDYQGKKDRLEEVIGLSEDPELWNDPKRAQEIGKERKILEGIVLTLDNIASGIEDNRMLIEMTVEENDEEGFAAVQEDVAGLEKQMADLEFKRMFNQPADPNNCFIDITAGAGGTEAEDWAGMLFRMYSRYAERKGFKIEILEEDDGEIAGINRATIRVEGEYAYGLLRTETGVHRLVRYSPFDSNNKRHTSFASVFVYPEIDDSIEIEINPADLRIDTYRASGAGGQHINKTDSAVRITHEPTGIVVQCQNDRSQHANKAAAMEMLKSKLYELEMRKRNEEKQALEEGKSDVGWGSQIRSYVLDSSRIKDLRTGYEVGNTKAVLDGDLDGFIEASLKQGV.

Gln254 carries the N5-methylglutamine modification.

The protein belongs to the prokaryotic/mitochondrial release factor family. Post-translationally, methylated by PrmC. Methylation increases the termination efficiency of RF2.

The protein localises to the cytoplasm. In terms of biological role, peptide chain release factor 2 directs the termination of translation in response to the peptide chain termination codons UGA and UAA. The protein is Peptide chain release factor 2 of Neisseria meningitidis serogroup C / serotype 2a (strain ATCC 700532 / DSM 15464 / FAM18).